Here is a 183-residue protein sequence, read N- to C-terminus: CASP-like protein UU1 (183 aa).

At 1-33 (MEESQQQSTKFDAPPSPYVPSRVYLAQIYWKKP) the chain is on the cytoplasmic side. The chain crosses the membrane as a helical span at residues 34-54 (AIVVLRVLQFVFSLIAFSVMA). The Extracellular portion of the chain corresponds to 55–72 (DLLHDVQGSIKSLSYTVA). The chain crosses the membrane as a helical span at residues 73-93 (IGVLACAYALAQLSFSLWCVI). The Cytoplasmic portion of the chain corresponds to 94–118 (RGATSSSGVTPLYQYATFICDQMST). A helical transmembrane segment spans residues 119-139 (YFLISAASATATLIDVSGVCG). The Extracellular segment spans residues 140–156 (SNGSGTNLCSRSTASVT). Residue N141 is glycosylated (N-linked (GlcNAc...) asparagine). The chain crosses the membrane as a helical span at residues 157-177 (FAFLAFLAFSASSVLTGYYLV). The Cytoplasmic portion of the chain corresponds to 178–183 (KCILKA).

This sequence belongs to the Casparian strip membrane proteins (CASP) family. In terms of assembly, homodimer and heterodimers.

The protein resides in the cell membrane. The polypeptide is CASP-like protein UU1 (Selaginella moellendorffii (Spikemoss)).